Consider the following 156-residue polypeptide: Small ribosomal subunit protein uS7 (156 aa).

The protein belongs to the universal ribosomal protein uS7 family. Part of the 30S ribosomal subunit. Contacts proteins S9 and S11.

In terms of biological role, one of the primary rRNA binding proteins, it binds directly to 16S rRNA where it nucleates assembly of the head domain of the 30S subunit. Is located at the subunit interface close to the decoding center, probably blocks exit of the E-site tRNA. The polypeptide is Small ribosomal subunit protein uS7 (Leifsonia xyli subsp. xyli (strain CTCB07)).